The following is a 214-amino-acid chain: MSDTNPDCVIIGIAGASASGKSLIARTIYNELTAELGEDQIGVITEDCYYKDQSHLPMAERIKTNYDHPAAFDHALLAEHLKQLMAGKAVDIPTYSYSEHTRTDQTIRFTPKRIIILEGILLLNDSALRKLLNVSIFMDTPLDICLVRRLARDVQERGRTMDSVLEQYQKTVRPMFLQFIEPSKQYADIIIPRGGRNRIAIEMLKSRIRHLLLS.

An ATP-binding site is contributed by 15 to 22 (GASASGKS).

It belongs to the uridine kinase family.

Its subcellular location is the cytoplasm. The catalysed reaction is uridine + ATP = UMP + ADP + H(+). The enzyme catalyses cytidine + ATP = CMP + ADP + H(+). The protein operates within pyrimidine metabolism; CTP biosynthesis via salvage pathway; CTP from cytidine: step 1/3. It participates in pyrimidine metabolism; UMP biosynthesis via salvage pathway; UMP from uridine: step 1/1. The protein is Uridine kinase of Tolumonas auensis (strain DSM 9187 / NBRC 110442 / TA 4).